Consider the following 226-residue polypeptide: UPF0758 protein GK2618 (226 aa).

Positions 104-226 (VIRCPEDGAK…FISLKEKGYV (123 aa)) constitute an MPN domain. Zn(2+) is bound by residues H175, H177, and D188. Residues 175 to 188 (HNHPSGDPTPSRED) carry the JAMM motif motif.

This sequence belongs to the UPF0758 family.

In Geobacillus kaustophilus (strain HTA426), this protein is UPF0758 protein GK2618.